A 413-amino-acid polypeptide reads, in one-letter code: Multifunctional CCA protein (413 aa).

Residues Gly-8 and Arg-11 each contribute to the ATP site. Positions 8 and 11 each coordinate CTP. Residues Asp-21 and Asp-23 each contribute to the Mg(2+) site. Positions 91, 143, and 146 each coordinate ATP. Arg-91, Arg-143, and Arg-146 together coordinate CTP. One can recognise an HD domain in the interval 232–333 (TGVHVMMVVD…VRLFERSDAL (102 aa)).

This sequence belongs to the tRNA nucleotidyltransferase/poly(A) polymerase family. Bacterial CCA-adding enzyme type 1 subfamily. Monomer. Can also form homodimers and oligomers. Mg(2+) is required as a cofactor. Requires Ni(2+) as cofactor.

It catalyses the reaction a tRNA precursor + 2 CTP + ATP = a tRNA with a 3' CCA end + 3 diphosphate. The catalysed reaction is a tRNA with a 3' CCA end + 2 CTP + ATP = a tRNA with a 3' CCACCA end + 3 diphosphate. Catalyzes the addition and repair of the essential 3'-terminal CCA sequence in tRNAs without using a nucleic acid template. Adds these three nucleotides in the order of C, C, and A to the tRNA nucleotide-73, using CTP and ATP as substrates and producing inorganic pyrophosphate. tRNA 3'-terminal CCA addition is required both for tRNA processing and repair. Also involved in tRNA surveillance by mediating tandem CCA addition to generate a CCACCA at the 3' terminus of unstable tRNAs. While stable tRNAs receive only 3'-terminal CCA, unstable tRNAs are marked with CCACCA and rapidly degraded. This Burkholderia orbicola (strain MC0-3) protein is Multifunctional CCA protein.